The following is a 493-amino-acid chain: MTTVRTRIAPSPTGDPHVGTAYIALFNYCFAKQHGGEFILRIEDTDQLRSTRESEQQIFDALRWLGIEWNEGPDVGGPHGPYRQSERGEIYAKYAKELVDAGHAFYCFCTAEELEQMRAEQQARGETPRYDGRALLMSAEEVQRRLDAGEPHVIRMKVPSEGICVVPDMLRGDVEIPWDRMDMQVLMKNDGLPTYFLANVVDDHLMGITHVLRGEEWLPSAPKLIKLYEYFGWEQPKLCYMPLLRNPDKSKLSKRKNPTSVTFYERMGFMPEAMLNYLGRMGWSMPDEREKFSLAEMVEHFDLSRISLGGPIFDIEKLSWLNGQWLRELPVEEFAARLQKWAFNSDYMMKIAPHVQGRVETFSQVAPLGGFFFEGALKLDAKLFESKKLSADQVRQVIQLILWKLESLRQWEKERITGCIQAVVEALELKLRDAMPLMFAAITGQASSVSVLDAMEILGPDLTRYRLRQALDLLGGVSKKENKEWEKLLASIA.

Residues 10 to 20 (PSPTGDPHVGT) carry the 'HIGH' region motif. The 'KMSKS' region motif lies at 251 to 255 (KLSKR). Position 254 (Lys254) interacts with ATP.

The protein belongs to the class-I aminoacyl-tRNA synthetase family. Glutamate--tRNA ligase type 1 subfamily. Monomer.

It localises to the cytoplasm. It catalyses the reaction tRNA(Glu) + L-glutamate + ATP = L-glutamyl-tRNA(Glu) + AMP + diphosphate. Catalyzes the attachment of glutamate to tRNA(Glu) in a two-step reaction: glutamate is first activated by ATP to form Glu-AMP and then transferred to the acceptor end of tRNA(Glu). This is Glutamate--tRNA ligase from Pseudomonas putida (strain ATCC 47054 / DSM 6125 / CFBP 8728 / NCIMB 11950 / KT2440).